The primary structure comprises 424 residues: MSVTMADQQPEKTTAPASDVADSQPAVVSNTDTRKETTETAEPQSEDKTATTTAQPAVETTATQSGTAETPAEADKAPAEVQQPPQAEEEKPVAQQPEQPAYLAKNPALSQFFERLPAIVSSSGHAEMWGVPLKDSNDAPTVNVLIKFLRANEGNVKLAEEQLTKALKWRKETNPSALAESTSYSATKFGGLGYLTTYKEANGAETVVTWNIYGGVKDINTTFGDMNEFVKWRVALMELAVKELKMAEATSVIDYDGEDPYQMIQVHDYQNVSFLRLNPAIKAATKKTIEVFTTAYPELLREKFFVNVPAIMGWMFAAMKVFLSKNTTRKFHPISNGANLAREFPSLKDQFPKVYGGSAPALQEGARTVSLIQDESAPAATEQSKEQANKEEAAQEESKPESAPEQPKADPDVIVQEAPAADAK.

Polar residues-rich tracts occupy residues 1 to 16 and 50 to 68; these read MSVT…TTAP and ATTT…SGTA. Residues 1-98 form a disordered region; it reads MSVTMADQQP…EEKPVAQQPE (98 aa). Positions 188 to 363 constitute a CRAL-TRIO domain; it reads KFGGLGYLTT…VYGGSAPALQ (176 aa). Residues Tyr213, Arg233, His267, Tyr269, and Lys303 each contribute to the heme site. The tract at residues 372-424 is disordered; that stretch reads IQDESAPAATEQSKEQANKEEAAQEESKPESAPEQPKADPDVIVQEAPAADAK. The span at 383–411 shows a compositional bias: basic and acidic residues; it reads QSKEQANKEEAAQEESKPESAPEQPKADP.

This sequence belongs to the SFH5 family. It depends on heme b as a cofactor.

It localises to the cytoplasm. The protein localises to the endoplasmic reticulum membrane. The protein resides in the microsome membrane. It catalyses the reaction a 1,2-diacyl-sn-glycero-3-phospho-(1D-myo-inositol)(in) = a 1,2-diacyl-sn-glycero-3-phospho-(1D-myo-inositol)(out). Its function is as follows. Non-classical phosphatidylinositol (PtdIns) transfer protein (PITP), which exhibits PtdIns-binding/transfer activity in the absence of detectable PtdCho-binding/transfer activity. Regulates PtdIns(4,5)P2 homeostasis at the plasma membrane. Heme-binding protein that may play a role in organic oxidant-induced stress responses. This chain is Phosphatidylinositol transfer protein sfh5 (sfh5), found in Aspergillus fumigatus (strain ATCC MYA-4609 / CBS 101355 / FGSC A1100 / Af293) (Neosartorya fumigata).